Here is a 1139-residue protein sequence, read N- to C-terminus: Integrin alpha ina-1 (1139 aa).

A signal peptide spans 1 to 19 (MRECIISWTLLLCLSCVKS). Over 20–1084 (FNLDVNAPIY…PTIGDSRPIP (1065 aa)) the chain is Extracellular. Residues 21 to 85 (NLDVNAPIYR…CDINTFYNGG (65 aa)) form an FG-GAP 1 repeat. N-linked (GlcNAc...) asparagine glycosylation is found at asparagine 108 and asparagine 136. FG-GAP repeat units follow at residues 111 to 171 (RGRT…LQST), 180 to 231 (LPTT…IFDS), 242 to 302 (NGDM…SSSK), 307 to 370 (EDKF…QRKQ), 378 to 438 (HPPK…IEKF), and 448 to 510 (GNDL…MEKR). Asparagine 313 carries an N-linked (GlcNAc...) asparagine glycan. N-linked (GlcNAc...) asparagine glycosylation is found at asparagine 580, asparagine 788, asparagine 851, and asparagine 1026. The chain crosses the membrane as a helical span at residues 1085-1106 (WWIYVIAAVIGVLILSLIIICL). Topologically, residues 1107 to 1139 (SKCGFFKRNRLDQPSLYTAQLKHEREEWADTGL) are cytoplasmic.

This sequence belongs to the integrin alpha chain family. As to quaternary structure, heterodimer of an alpha and a beta subunit. Alpha ina-1 associates with beta pat-3. Interacts (via cytoplasmic domain) with src-1 (when phosphorylated at 'Tyr-416').

It localises to the membrane. The protein resides in the cell projection. It is found in the phagocytic cup. The protein localises to the cytoplasmic vesicle. Its subcellular location is the phagosome membrane. Plays a role in cell migration, axon fasciculation, and morphogenesis. During gonad morphogenesis, involved in distal tip cell (DTC)-mediated guidance of gonad elongation, in maintaining their sharp tapering morphology and in their migration. Involved in the anterior-posterior positioning of QR neuroblast descendants by regulating the migratory speed of QR.p. Probably by acting as a receptor for apoptotic cells, plays a role in the clearance of apoptotic cells during mid-embryogenesis. The chain is Integrin alpha ina-1 (ina-1) from Caenorhabditis elegans.